Consider the following 383-residue polypeptide: UDP-N-acetylenolpyruvoylglucosamine reductase (383 aa).

A compositionally biased stretch (basic and acidic residues) spans 1–13 (MRTRRDVPADRSG). Residues 1–26 (MRTRRDVPADRSGRSRVSRHPGLSVP) form a disordered region. Residues 49 to 215 (LGGPATRLLT…LRVRFELENA (167 aa)) enclose the FAD-binding PCMH-type domain. Arg192 is an active-site residue. The Proton donor role is filled by Ser271. Residue Glu375 is part of the active site.

It belongs to the MurB family. FAD serves as cofactor.

It is found in the cytoplasm. The catalysed reaction is UDP-N-acetyl-alpha-D-muramate + NADP(+) = UDP-N-acetyl-3-O-(1-carboxyvinyl)-alpha-D-glucosamine + NADPH + H(+). It functions in the pathway cell wall biogenesis; peptidoglycan biosynthesis. Cell wall formation. This is UDP-N-acetylenolpyruvoylglucosamine reductase from Streptomyces coelicolor (strain ATCC BAA-471 / A3(2) / M145).